We begin with the raw amino-acid sequence, 27 residues long: Phospholipase A2 P-elapitoxin-Aa1a alpha chain (27 aa).

The protein belongs to the phospholipase A2 family. Group I subfamily. As to quaternary structure, heterotrimer of alpha, beta and gamma chains, each related to PLA2. The cofactor is Ca(2+). As to expression, expressed by the venom gland.

The protein localises to the secreted. It catalyses the reaction a 1,2-diacyl-sn-glycero-3-phosphocholine + H2O = a 1-acyl-sn-glycero-3-phosphocholine + a fatty acid + H(+). Heterotrimer: presynaptic neurotoxin. Inhibits nerve-evoked twitch contractions but not responses to cholinergic agonists acetylcholine and carbachol and to depolarizing agonist KCl. Causes a fade in tetanic contractions. Displays a triphasic mode of action with depression, enhancement and blockade of neurotransmission. Does not display myotoxic activity such as changes in baseline muscle tension or inhibition of directly stimulated muscle twitches. All subunits are necessary for maximum toxicity. In terms of biological role, monomer: Snake venom phospholipase A2 (PLA2) alpha chain that has enzymatic activity. PLA2 catalyzes the calcium-dependent hydrolysis of the 2-acyl groups in 3-sn-phosphoglycerides. The sequence is that of Phospholipase A2 P-elapitoxin-Aa1a alpha chain from Acanthophis antarcticus (Common death adder).